A 432-amino-acid chain; its full sequence is Polyamine export protein (432 aa).

One can recognise a CNNM transmembrane domain in the interval 1-201 (MIMELFHTIL…AEAGVLKTQE (201 aa)). 4 helical membrane passes run 2–22 (IMELFHTILAIVALILSSAVV), 61–81 (FITVVQILLNMVAILGGGIGE), 100–120 (WIAPTASTIAFILVTCLFILF), and 138–158 (LSVVGIMNFSMYVFKPLVWFF). CBS domains lie at 220–279 (MTTR…NENV) and 286–345 (LLRK…SNEE).

The protein belongs to the UPF0053 family. PaeA subfamily.

It localises to the cell inner membrane. In terms of biological role, involved in cadaverine and putrescine tolerance in stationary phase. May facilitate the efflux of both cadaverine and putrescine from the cytoplasm, reducing potentially toxic levels under certain stress conditions. The protein is Polyamine export protein of Haemophilus influenzae (strain ATCC 51907 / DSM 11121 / KW20 / Rd).